We begin with the raw amino-acid sequence, 141 residues long: Large ribosomal subunit protein uL11 (141 aa).

The protein belongs to the universal ribosomal protein uL11 family. Part of the ribosomal stalk of the 50S ribosomal subunit. Interacts with L10 and the large rRNA to form the base of the stalk. L10 forms an elongated spine to which L12 dimers bind in a sequential fashion forming a multimeric L10(L12)X complex. Post-translationally, one or more lysine residues are methylated.

Its function is as follows. Forms part of the ribosomal stalk which helps the ribosome interact with GTP-bound translation factors. In Lactobacillus acidophilus (strain ATCC 700396 / NCK56 / N2 / NCFM), this protein is Large ribosomal subunit protein uL11.